Reading from the N-terminus, the 277-residue chain is Ribosomal RNA small subunit methyltransferase A (277 aa).

The S-adenosyl-L-methionine site is built by His-20, Leu-22, Gly-47, Glu-71, Asp-94, and Asn-116.

This sequence belongs to the class I-like SAM-binding methyltransferase superfamily. rRNA adenine N(6)-methyltransferase family. RsmA subfamily.

It localises to the cytoplasm. The enzyme catalyses adenosine(1518)/adenosine(1519) in 16S rRNA + 4 S-adenosyl-L-methionine = N(6)-dimethyladenosine(1518)/N(6)-dimethyladenosine(1519) in 16S rRNA + 4 S-adenosyl-L-homocysteine + 4 H(+). Its function is as follows. Specifically dimethylates two adjacent adenosines (A1518 and A1519) in the loop of a conserved hairpin near the 3'-end of 16S rRNA in the 30S particle. May play a critical role in biogenesis of 30S subunits. The chain is Ribosomal RNA small subunit methyltransferase A from Burkholderia sp.